We begin with the raw amino-acid sequence, 492 residues long: Dipeptide permease D (492 aa).

13 consecutive transmembrane segments (helical) span residues 14–34 (VVALQIWEYFSFYGMRALLIL), 49–69 (ALFSAYCSLVYVTPILGGYLA), 91–111 (LVLGASETAPVFLYLSLAIIV), 138–158 (GGFSLMYAAGNIGSIIAPIAC), 167–187 (WAMGFALAAIGMVAGLVIFLC), 212–232 (NWGWLLVLLVTAPLLIAVLFW), 236–256 (SVYALIVATVIGLAVLARIYL), 269–289 (LIVVLTAFSLLFWAFAQQGGS), 312–332 (MFQSVNAFAVMLCGMVLAWLV), 344–364 (IWGKFALGLGLMSAGFCILTL), 379–399 (LMVLGLAVMGFAELFIDPVAM), 413–433 (VLTGIYMLLSGAIANYLAGVI), and 458–478 (VFSQITWGALACVGVVLVIWL).

This sequence belongs to the major facilitator superfamily. Proton-dependent oligopeptide transporter (POT/PTR) (TC 2.A.17) family. DtpD subfamily.

The protein resides in the cell inner membrane. Probable proton-dependent permease that transports dipeptides. The sequence is that of Dipeptide permease D from Klebsiella pneumoniae (strain 342).